Reading from the N-terminus, the 577-residue chain is MSNPRTKSPNTNRGQGLRSERSALLNDSLSSLNGNSSYDSIKDSSKNNKDVAEVNEYPRRPESSVSVVSNSPHRQDAATTNTVSTVSVSKVLPALLLGVVLAALDNTIVASTYTKIGAEFGKFSQVSWTATAYMISCTAFQPLFGKFCDIYGRKKTLLAAYCVFGIGCFLCGTSRSLWQLVAARAIAGIGGGGMNSTVSILMSDIVPLKQRGTYQGIINVFFAIGSSLGGPVGGYFADQYTWRIGFLIQVPLIAIAFLCVYFTLNLPHHNHVSFMTRFRKIDLKGLILLIIGVTTMTCAFTLGGNVREWNDPVVISLLIASSISYLSFVYVEAFVAFEPLAPMDVLTERTCLSSYLCNFFHSVANFGWIYGMPLFFQSIKNEGAEKSGIRLIPMIIGSSLGSLLGGAVISLTGNYKKITVGSYFFGSVAALFMLRYGYSNFNWEYAVYPFSGGLGNGIAVTTTLVAIIHASPSAFQASAIATSYLFRSNGCVLGVSISSSIVQTVLGIKLRKSLDFDVDELLHHLRKDISYVHRLPEEIRQTVLDALLGSIHYSFLFVSFMFFCAFVCSMFIKNRNL.

Polar residues predominate over residues 1–14 (MSNPRTKSPNTNRG). Residues 1–80 (MSNPRTKSPN…SPHRQDAATT (80 aa)) form a disordered region. A compositionally biased stretch (low complexity) spans 22-39 (SALLNDSLSSLNGNSSYD). Positions 40–62 (SIKDSSKNNKDVAEVNEYPRRPE) are enriched in basic and acidic residues. 14 helical membrane passes run 91–111 (VLPA…IVAS), 123–145 (FSQV…PLFG), 157–177 (LLAA…SRSL), 186–206 (IAGI…SDIV), 217–237 (IINV…GYFA), 244–264 (IGFL…YFTL), 286–306 (LILL…GGNV), 317–337 (LLIA…FVAF), 356–376 (LCNF…PLFF), 391–411 (LIPM…VISL), 418–438 (ITVG…RYGY), 448–468 (YPFS…VAII), 490–510 (GCVL…GIKL), and 547–567 (LLGS…CAFV).

The protein belongs to the major facilitator superfamily.

It localises to the vacuole. The protein resides in the membrane. Its function is as follows. MFS-type transporter involved in vacuolar amino acid uptake. This chain is Vacuolar membrane amino acid uptake transporter fnx2 (fnx2), found in Schizosaccharomyces pombe (strain 972 / ATCC 24843) (Fission yeast).